The primary structure comprises 67 residues: Metallothionein-B (67 aa).

Belongs to the metallothionein superfamily. Type 4 family.

Metallothioneins have a high content of cysteine residues that bind various heavy metals. The chain is Metallothionein-B from Sphaerechinus granularis (Purple sea urchin).